The following is a 443-amino-acid chain: POU domain, class 3, transcription factor 3-B (443 aa).

Disordered regions lie at residues 21–40 (IVHSDSGGGMQQGSAAVTSV), 100–150 (SPWS…AGAW), and 182–244 (NGML…PTSD). Positions 101–121 (PWSSSPVGMTGSPQQQDVKNN) are enriched in polar residues. Residues 210–225 (SHHHHHHHQHQHHQQA) are compositionally biased toward basic residues. One can recognise a POU-specific domain in the interval 238 to 312 (EDTPTSDDLE…LLNKWLEEAD (75 aa)). S317 carries the phosphoserine modification. Residues 330-389 (KRKKRTSIEVSVKGALESHFLKCPKPSAQEITSLADNLQLEKEVVRVWFCNRRQKEKRMT) constitute a DNA-binding region (homeobox).

This sequence belongs to the POU transcription factor family. Class-3 subfamily. In terms of tissue distribution, predominantly expressed in the central nervous system.

The protein resides in the nucleus. Its function is as follows. Transcription factor that may play important roles in patterning the embryonic brain. In Danio rerio (Zebrafish), this protein is POU domain, class 3, transcription factor 3-B (pou3f3b).